A 483-amino-acid polypeptide reads, in one-letter code: Glutamyl-tRNA(Gln) amidotransferase subunit A (483 aa).

Residues lysine 77 and serine 152 each act as charge relay system in the active site. Serine 176 (acyl-ester intermediate) is an active-site residue.

Belongs to the amidase family. GatA subfamily. As to quaternary structure, heterotrimer of A, B and C subunits.

The catalysed reaction is L-glutamyl-tRNA(Gln) + L-glutamine + ATP + H2O = L-glutaminyl-tRNA(Gln) + L-glutamate + ADP + phosphate + H(+). In terms of biological role, allows the formation of correctly charged Gln-tRNA(Gln) through the transamidation of misacylated Glu-tRNA(Gln) in organisms which lack glutaminyl-tRNA synthetase. The reaction takes place in the presence of glutamine and ATP through an activated gamma-phospho-Glu-tRNA(Gln). The sequence is that of Glutamyl-tRNA(Gln) amidotransferase subunit A from Shouchella clausii (strain KSM-K16) (Alkalihalobacillus clausii).